A 355-amino-acid polypeptide reads, in one-letter code: WAT1-related protein At1g25270 (355 aa).

The next 10 helical transmembrane spans lie at 4–24 (VVAM…FKIT), 33–53 (VLVA…ALIF), 65–85 (LLLL…ILYL), 94–114 (TFSA…GLVF), 134–154 (LLGA…IHIW), 175–195 (VSIL…LWLL), 207–227 (LYWN…IIAL), 244–264 (LLAT…LVAW), 272–292 (LFVT…GSFA), and 297–317 (LHLG…LVVW). In terms of domain architecture, EamA 1 spans 12-142 (FIFAGMFILF…TLLGACGALV (131 aa)). The region spanning 210-316 (NTSLMNGVGS…IMVGGVYLVV (107 aa)) is the EamA 2 domain.

Belongs to the drug/metabolite transporter (DMT) superfamily. Plant drug/metabolite exporter (P-DME) (TC 2.A.7.4) family.

Its subcellular location is the membrane. This is WAT1-related protein At1g25270 from Arabidopsis thaliana (Mouse-ear cress).